An 880-amino-acid chain; its full sequence is MOG interacting and ectopic P-granules protein 1 (880 aa).

Residues 1-20 are compositionally biased toward polar residues; that stretch reads MVTSDETVLATTTNKTSITT. Disordered stretches follow at residues 1 to 37, 82 to 257, and 350 to 370; these read MVTS…SETD, DKVE…DDNE, and ERPK…QHNP. Positions 23-37 are enriched in basic and acidic residues; the sequence is MEPKSSDESTDSETD. A compositionally biased stretch (polar residues) spans 87–105; sequence ATNSVVDLSSNGSSATTSV. A compositionally biased stretch (acidic residues) spans 108–120; that stretch reads EEQEEKANEDETN. Composition is skewed to basic and acidic residues over residues 154–170 and 183–193; these read SKSD…IKDS and KPEEKEEKNDT. Acidic residues predominate over residues 215–224; sequence QLDDDDDDIQ. Composition is skewed to basic and acidic residues over residues 235 to 252 and 350 to 364; these read QKTE…KAEP and ERPK…ERQQ. 2 consecutive C2H2-type zinc fingers follow at residues 436-459 and 465-488; these read SRCG…ETLH and FQCT…FEAH. Residues 501-523 form a CCHC-type zinc finger; sequence YPCAICEEDFNFKGVREQHYKQC. C2H2-type zinc fingers lie at residues 728–751, 768–791, 809–830, and 841–864; these read FQCE…QVLH, LACS…VMSH, GRCK…VADH, and YSCD…SSTH.

In terms of assembly, interacts with hda-1, let-418, lin-1, mog-1, mog-4, mog-5, mog-6, pie-1 and unc-98.

It localises to the nucleus. Its function is as follows. Has a broad role in development, specifically in the genetic pathway SynMuvB that negatively regulates specification of the vulval cell fate. Required for fem-3 3'-UTR-mediated repression in the regulation of the sperm/oocyte switch. Acts by regulating the translation of fem-3 mRNA, by binding to its 3'-UTR. The polypeptide is MOG interacting and ectopic P-granules protein 1 (Caenorhabditis briggsae).